Consider the following 114-residue polypeptide: uncharacterized protein (114 aa).

Functionally, possibly involved in pGI2 replication mechanism. This is an uncharacterized protein from Bacillus thuringiensis.